The chain runs to 554 residues: MPTINVNKVDLERLSNISLSDKMIEDRFPMMGVEVEEIFEEVDKSGKKQKMVQFSINPDRPDYLSVEGLARGFRGFMGITTGIQEFEVLPSDIKVTVEENKTRPYVAFALVKNVLMDELVLESMINLQEKLHWAIGRDRKKLAIGIHDFDKVKAPFTYKEIKGDEIKFVPLGYEDEEMTPREIIEKHEKGIKYAHLIQDDRFPIIVDVNGEVLSLPPIINGTLTKVTPTSKNLLIDITGTEKEAVEETLNIIVCALAERRGTIVSVNVNGKKYPDLTLKSRIISIESINKKLGLELNPGEIIQAVKKSGMDALYEDGNLIVKIPAYRNDILHNVDLKEEIAINYGYEKFEGKLPSVATTGSKDPVEKKCNAMSDLMIGLGFYEVMNLTLSNQDTLFEKMNLKVEEKDYIEVLKPASIEHRVLRTSILPLLLETLYINKHHSLPQKIFEIGDCVIIDENDTETDTKCKNIKKIAGAITHPLTNFNEIKSSTEALLREFFEDFEFENYEHPAFIPGRCAKIIKDGKEVGFFGEIHPEVILNFELEHPIVGFEITIE.

The B5 domain occupies 276-351 (LTLKSRIISI…INYGYEKFEG (76 aa)). Asp-329, Asp-335, Glu-338, and Glu-339 together coordinate Mg(2+).

This sequence belongs to the phenylalanyl-tRNA synthetase beta subunit family. Type 2 subfamily. Tetramer of two alpha and two beta subunits. Mg(2+) is required as a cofactor.

It is found in the cytoplasm. It catalyses the reaction tRNA(Phe) + L-phenylalanine + ATP = L-phenylalanyl-tRNA(Phe) + AMP + diphosphate + H(+). This chain is Phenylalanine--tRNA ligase beta subunit, found in Methanococcus maripaludis (strain C7 / ATCC BAA-1331).